Reading from the N-terminus, the 171-residue chain is 3-hydroxydecanoyl-[acyl-carrier-protein] dehydratase (171 aa).

Histidine 71 is an active-site residue.

Belongs to the thioester dehydratase family. FabA subfamily. Homodimer.

It is found in the cytoplasm. It catalyses the reaction a (3R)-hydroxyacyl-[ACP] = a (2E)-enoyl-[ACP] + H2O. The catalysed reaction is (3R)-hydroxydecanoyl-[ACP] = (2E)-decenoyl-[ACP] + H2O. The enzyme catalyses (2E)-decenoyl-[ACP] = (3Z)-decenoyl-[ACP]. Its pathway is lipid metabolism; fatty acid biosynthesis. Functionally, necessary for the introduction of cis unsaturation into fatty acids. Catalyzes the dehydration of (3R)-3-hydroxydecanoyl-ACP to E-(2)-decenoyl-ACP and then its isomerization to Z-(3)-decenoyl-ACP. Can catalyze the dehydratase reaction for beta-hydroxyacyl-ACPs with saturated chain lengths up to 16:0, being most active on intermediate chain length. This Hamiltonella defensa subsp. Acyrthosiphon pisum (strain 5AT) protein is 3-hydroxydecanoyl-[acyl-carrier-protein] dehydratase.